The sequence spans 3584 residues: D-lysergyl-peptide-synthetase subunit 1 (3584 aa).

The disordered stretch occupies residues 25-44 (IESINGDKNKSERHTASSSA). The segment covering 29–39 (NGDKNKSERHT) has biased composition (basic and acidic residues). Positions 307-706 (SCCSRPNSQA…LGRKDDQVKI (400 aa)) are adenylation (A) domain 1. Positions 848–917 (REKLLQALFA…TLREIVIVST (70 aa)) constitute a Carrier 1 domain. Ser880 is modified (O-(pantetheine 4'-phosphoryl)serine). Residues 962–1353 (EDIYPCTHLQ…EHILTQIHSN (392 aa)) are condensation (C) domain 1. The tract at residues 1396–1803 (QAKCQAQPDA…RRKDAQVKIR (408 aa)) is adenylation (A) domain 2. One can recognise a Carrier 2 domain in the interval 1948-2016 (TEHEISAIWA…TIRKLALARG (69 aa)). Ser1980 is subject to O-(pantetheine 4'-phosphoryl)serine. Residues 2066–2483 (ERIYPCSPIQ…ALPVLDEDQM (418 aa)) form a condensation (C) domain 2 region. The tract at residues 2508 to 2906 (QCIRCPDSPS…GRNDDQVKVR (399 aa)) is adenylation (A) domain 3. Positions 3041–3109 (MEAELQQLVG…RLSDLARIVE (69 aa)) constitute a Carrier 3 domain. O-(pantetheine 4'-phosphoryl)serine is present on Ser3073. A cyclization (Cyc) domain region spans residues 3174–3472 (LYFSKPMASE…VAKSTTWSSD (299 aa)).

The protein belongs to the NRP synthetase family.

It functions in the pathway alkaloid biosynthesis; ergot alkaloid biosynthesis. In terms of biological role, D-lysergyl-peptide-synthetase subunit 1; part of the gene cluster that mediates the biosynthesis of fungal ergot alkaloid. DmaW catalyzes the first step of ergot alkaloid biosynthesis by condensing dimethylallyl diphosphate (DMAP) and tryptophan to form 4-dimethylallyl-L-tryptophan. The second step is catalyzed by the methyltransferase easF that methylates 4-dimethylallyl-L-tryptophan in the presence of S-adenosyl-L-methionine, resulting in the formation of 4-dimethylallyl-L-abrine. The catalase easC and the FAD-dependent oxidoreductase easE then transform 4-dimethylallyl-L-abrine to chanoclavine-I which is further oxidized by easD in the presence of NAD(+), resulting in the formation of chanoclavine-I aldehyde. Agroclavine dehydrogenase easG then mediates the conversion of chanoclavine-I aldehyde to agroclavine via a non-enzymatic adduct reaction: the substrate is an iminium intermediate that is formed spontaneously from chanoclavine-I aldehyde in the presence of glutathione. The presence of easA is not required to complete this reaction. Further conversion of agroclavine to paspalic acid is a two-step process involving oxidation of agroclavine to elymoclavine and of elymoclavine to paspalic acid, the second step being performed by the elymoclavine oxidase cloA. Paspalic acid is then further converted to D-lysergic acid. Ergopeptines are assembled from D-lysergic acid and three different amino acids by the D-lysergyl-peptide-synthetases composed each of a monomudular and a trimodular nonribosomal peptide synthetase subunit. LpsB and lpsC encode the monomodular subunits responsible for D-lysergic acid activation and incorporation into the ergopeptine backbone. LpsA1 and A2 subunits encode the trimodular nonribosomal peptide synthetase assembling the tripeptide portion of ergopeptines. LpsA1 is responsible for formation of the major ergopeptine, ergotamine, and lpsA2 for alpha-ergocryptine, the minor ergopeptine of the total alkaloid mixture elaborated by C.purpurea. D-lysergyl-tripeptides are assembled by the nonribosomal peptide synthetases and released as N-(D-lysergyl-aminoacyl)-lactams. Cyclolization of the D-lysergyl-tripeptides is performed by the Fe(2+)/2-ketoglutarate-dependent dioxygenase easH which introduces a hydroxyl group into N-(D-lysergyl-aminoacyl)-lactam at alpha-C of the aminoacyl residue followed by spontaneous condensation with the terminal lactam carbonyl group. In Claviceps purpurea (strain 20.1) (Ergot fungus), this protein is D-lysergyl-peptide-synthetase subunit 1.